Here is a 1377-residue protein sequence, read N- to C-terminus: DNA-directed RNA polymerase subunit beta (1377 aa).

This sequence belongs to the RNA polymerase beta chain family. In terms of assembly, the RNAP catalytic core consists of 2 alpha, 1 beta, 1 beta' and 1 omega subunit. When a sigma factor is associated with the core the holoenzyme is formed, which can initiate transcription.

The enzyme catalyses RNA(n) + a ribonucleoside 5'-triphosphate = RNA(n+1) + diphosphate. DNA-dependent RNA polymerase catalyzes the transcription of DNA into RNA using the four ribonucleoside triphosphates as substrates. The sequence is that of DNA-directed RNA polymerase subunit beta from Brucella canis (strain ATCC 23365 / NCTC 10854 / RM-666).